A 177-amino-acid polypeptide reads, in one-letter code: MSRVAKKPIALPSGVNVTINGNNVALKGPKGQLSYDLHADVEVSQEGNTLQLAPRNGDASKYAMAGTMRALVNNMVVGVSQGFERKLELVGVGYRAQAQGKTLNLTLGFSHPVAYPVPEGITIETPSQTEILVKGVDKQVVGQVAAEIRAFRPPEPYKGKGVKYANEQIIRKEAKKK.

This sequence belongs to the universal ribosomal protein uL6 family. Part of the 50S ribosomal subunit.

This protein binds to the 23S rRNA, and is important in its secondary structure. It is located near the subunit interface in the base of the L7/L12 stalk, and near the tRNA binding site of the peptidyltransferase center. This Thioalkalivibrio sulfidiphilus (strain HL-EbGR7) protein is Large ribosomal subunit protein uL6.